The chain runs to 132 residues: MDTMNWLDQVKWDAQGLVPVIAQEAATGDVLMFAWMNREALAKTAELGRAVYYSRSRGKLWFKGEESGHVQQVHDIRLDCDSDVVLLKVTQLGHEPGIACHTGRHSCFFNALQNGAWQAVDPVLKDPESIYK.

Asp-79 provides a ligand contact to Mg(2+). Cys-80 contributes to the Zn(2+) binding site. Mg(2+) contacts are provided by Asp-81 and Asp-83. The Zn(2+) site is built by Cys-100 and Cys-107.

It belongs to the PRA-CH family. Homodimer. Mg(2+) serves as cofactor. Zn(2+) is required as a cofactor.

Its subcellular location is the cytoplasm. The enzyme catalyses 1-(5-phospho-beta-D-ribosyl)-5'-AMP + H2O = 1-(5-phospho-beta-D-ribosyl)-5-[(5-phospho-beta-D-ribosylamino)methylideneamino]imidazole-4-carboxamide. The protein operates within amino-acid biosynthesis; L-histidine biosynthesis; L-histidine from 5-phospho-alpha-D-ribose 1-diphosphate: step 3/9. Its function is as follows. Catalyzes the hydrolysis of the adenine ring of phosphoribosyl-AMP. This chain is Phosphoribosyl-AMP cyclohydrolase, found in Acidovorax sp. (strain JS42).